Consider the following 395-residue polypeptide: Phosphoglycerate kinase (395 aa).

Substrate is bound by residues 21–23, R36, 59–62, R114, and R147; these read DIN and HFGR. ATP is bound by residues K197, E322, and 352 to 355; that span reads GGDT.

Belongs to the phosphoglycerate kinase family. As to quaternary structure, monomer.

Its subcellular location is the cytoplasm. The catalysed reaction is (2R)-3-phosphoglycerate + ATP = (2R)-3-phospho-glyceroyl phosphate + ADP. Its pathway is carbohydrate degradation; glycolysis; pyruvate from D-glyceraldehyde 3-phosphate: step 2/5. The sequence is that of Phosphoglycerate kinase from Roseobacter denitrificans (strain ATCC 33942 / OCh 114) (Erythrobacter sp. (strain OCh 114)).